Here is a 361-residue protein sequence, read N- to C-terminus: Histidinol-phosphate aminotransferase (361 aa).

Lys219 is subject to N6-(pyridoxal phosphate)lysine.

Belongs to the class-II pyridoxal-phosphate-dependent aminotransferase family. Histidinol-phosphate aminotransferase subfamily. In terms of assembly, homodimer. Pyridoxal 5'-phosphate is required as a cofactor.

The enzyme catalyses L-histidinol phosphate + 2-oxoglutarate = 3-(imidazol-4-yl)-2-oxopropyl phosphate + L-glutamate. It participates in amino-acid biosynthesis; L-histidine biosynthesis; L-histidine from 5-phospho-alpha-D-ribose 1-diphosphate: step 7/9. This is Histidinol-phosphate aminotransferase from Cereibacter sphaeroides (strain ATCC 17029 / ATH 2.4.9) (Rhodobacter sphaeroides).